The following is a 115-amino-acid chain: SPbeta prophage-derived uncharacterized protein YoqS (115 aa).

The protein is SPbeta prophage-derived uncharacterized protein YoqS (yoqS) of Bacillus subtilis (strain 168).